A 261-amino-acid polypeptide reads, in one-letter code: 14-3-3 protein 9 (261 aa).

Residues 239–261 (PEDAEDAQKGDATNKAGGGEDAE) form a disordered region.

It belongs to the 14-3-3 family. In terms of assembly, homodimer.

The sequence is that of 14-3-3 protein 9 (TFT9) from Solanum lycopersicum (Tomato).